The chain runs to 582 residues: BTB/POZ domain and ankyrin repeat-containing protein NPR1 (582 aa).

Residues 1 to 18 (MEPPTSHVTNAFSDSDSA) show a composition bias toward polar residues. The disordered stretch occupies residues 1 to 25 (MEPPTSHVTNAFSDSDSASVEEGGA). The BTB domain maps to 55 to 140 (ADARIAVPGG…VLDYLYSGRV (86 aa)). The C2HC NPR-type zinc finger occupies 147 to 161 (ACLCVDEDCAHVGCH). Residues C150, C155, H157, and C160 each contribute to the Zn(2+) site. ANK repeat units follow at residues 229–258 (RSNL…SLGL), 269–299 (KHVR…NLDD), 301–328 (FALH…DVNH), and 332–361 (RGYT…RPAD). A salicylic acid-binding core (SBC) region spans residues 391–526 (PSPKDRLCIE…VLDKIMDDET (136 aa)). Salicylate is bound at residue R436. Positions 551–582 (QKAFHEDKEENDRSGLSSSSSSTSIGAIRPRR) are disordered. Residues 553 to 563 (AFHEDKEENDR) show a composition bias toward basic and acidic residues. The segment covering 564–574 (SGLSSSSSSTS) has biased composition (low complexity).

The protein belongs to the plant 'ANKYRIN-BTB/POZ' family. 'NPR1-like' subfamily. Oligomer in an uninduced state; disulfide-linked. Forms activated monomer upon changes in cellular redox potential. Interacts with TGA2.1, TGA2.2, TGA2.3, LG2, TGAL1 and TGAL4. Interacts with NRR, RH1, RH2 and RH3.

The protein localises to the cytoplasm. Its subcellular location is the nucleus. The protein resides in the nuclear body. It participates in protein modification; protein ubiquitination. In terms of biological role, salicylic acid (SA)-binding substrate-specific adapter of an E3 ubiquitin-protein ligase complex (CUL3-RBX1-BTB) which mediates the ubiquitination and subsequent proteasomal degradation of target proteins. Transcription cofactor that represses gene expression in the absence of salicylic acid (SA), when attached to negative cis-elements (W-box) with WRKY transcription factors, but stimulates gene expression upon activation by SA, when sumoylated and attached to positive cis-elements (as-1) with TGA transcription factors, thus confering immunity through a series of gene regulations ending in a significant increase in antimicrobial and defense genes expression. Key positive factor of disease resistance. Plays an essential role in benzothiadiazole (BTH)-induced resistance to the blast fungus disease caused by Magnaporthe oryzae. Involved in defense response against the bacterial blight disease caused by Xanthomonas oryzae pv. oryzae (Xoo). Over-expression of NPR1/NH1 confers disease resistance to Xoo, but also enhances herbivore susceptibility. Functions as a transcriptional coactivator of TGA2.1 and LG2 in vitro. Involved in defense response against herbivore. Plants silencing NPR1/NH1 have increased herbivore-induced trypsin proteinase inhibitors and volatiles, which reduces the performance of the striped stem borer (SSB) Chilo suppressalis. This chain is BTB/POZ domain and ankyrin repeat-containing protein NPR1, found in Oryza sativa subsp. japonica (Rice).